The sequence spans 617 residues: uncharacterized protein (617 aa).

Composition is skewed to low complexity over residues 1–16 (MSKC…SNSS) and 36–45 (STTSSNGSNS). Residues 1–49 (MSKCATPTPSTSSNSSDEAKRSPQPMSRGFPQRNMSTTSSNGSNSPRHR) are disordered. The next 3 helical transmembrane spans lie at 219–239 (LMIG…GGLA), 262–282 (TAGA…FTGY), and 427–447 (PITL…LLTM).

It belongs to the TMCO4 family.

The protein localises to the membrane. This is an uncharacterized protein from Caenorhabditis elegans.